Here is a 336-residue protein sequence, read N- to C-terminus: Potassium channel subfamily K member 1 (336 aa).

Residues 1 to 20 (MLQSLAGSSCVRLVERHRSA) lie on the Cytoplasmic side of the membrane. Residues 21-41 (WCFGFLVLGYLLYLVFGAVVF) traverse the membrane as a helical segment. Over 42 to 103 (SSVELPYEDL…SNASGNWNWD (62 aa)) the chain is Extracellular. An N-linked (GlcNAc...) asparagine glycan is attached at Asn95. The segment at residues 104–116 (FTSALFFASTVLS) is an intramembrane region (helical). Residues 117–122 (TTGYGH) lie within the membrane without spanning it. The interval 117–122 (TTGYGH) is selectivity filter 1. The Extracellular segment spans residues 123-132 (TVPLSDGGKA). Residues 133–156 (FCIIYSVIGIPFTLLFLTAVVQRV) traverse the membrane as a helical segment. Residues 157–181 (TVHVTRRPVLYFHIRWGFSKQVVAI) are Cytoplasmic-facing. Residues 182-202 (VHAVLLGFVTVSCFFFIPAAV) traverse the membrane as a helical segment. The Extracellular portion of the chain corresponds to 203–211 (FSVLEDDWN). The helical intramembrane region spans 212–224 (FLESFYFCFISLS). The interval 225–230 (TIGLGD) is selectivity filter 2. Residues 225–231 (TIGLGDY) lie within the membrane without spanning it. The Extracellular portion of the chain corresponds to 232-243 (VPGEGYNQKFRE). A helical transmembrane segment spans residues 244 to 267 (LYKIGITCYLLLGLIAMLVVLETF). The Cytoplasmic segment spans residues 268 to 336 (CELHELKKFR…PPYEDGSADH (69 aa)). Lys274 is covalently cross-linked (Glycyl lysine isopeptide (Lys-Gly) (interchain with G-Cter in SUMO)). An important for intracellular retention in recycling endosomes region spans residues 293–299 (IMEHDQL). The disordered stretch occupies residues 310–336 (GLKEEQKQSEPFVASQSPPYEDGSADH). Residue Ser326 is modified to Phosphoserine.

The protein belongs to the two pore domain potassium channel (TC 1.A.1.8) family. Homodimer; disulfide-linked. Heterodimer with KCNK2; disulfide-linked. In astrocytes, forms mostly heterodimeric potassium channels with KCNK2, with only a minor proportion of functional channels containing homodimeric KCNK1. Interacts with KCNK3 and KCNK9, forming functional heterodimeric channels. Interacts with GNG4. Identified in a complex with PSD and ARF6; interacts only with PSD that is bound to ARF6. Interacts with UBE2I. In terms of processing, sumoylation is controversial. Sumoylated by UBE2I. Not sumoylated when expressed in xenopus oocytes or mammalian cells. Sumoylation inactivates the channel, but does not interfere with expression at the cell membrane. Sumoylation of a single subunit is sufficient to silence the dimeric channel. Sumoylation of KCNK1 is sufficient to silence heterodimeric channels formed by KCNK1 and KCNK3 or KCNK9. Desumoylated by SENP1; this activates the channel. Desumoylated by SENP1; this strongly increases halothane-mediated activation of heterodimeric channels formed with KCNK9. SENP1 treatment has no effect. In terms of tissue distribution, detected in spiral ganglion neurons. Detected in hippocampus CA1 and CA1 regions and in the molecular layer of the dentate gyrus. Detected on hippocampus astrocytes. Highly expressed in the stria vascularis in the cochlea. Detected in pancreas islet beta cells. Detected in kidney, at brush border membranes in proximal tubules and in cytoplasmic structures in distal convoluted tubules, thick ascending limbs and collecting ducts (at protein level). Widely expressed. Detected in spiral ganglion cells. Highest expression in brain, kidney, thyroid, salivary gland, adrenal gland, prostate, epididymis, uterus, placenta, colon and jejunum. Moderate expression in eyes, pituitary, pancreas, smooth muscle, testis and ovary. Very low levels in lung, aorta, liver, heart, skeletal muscle, thymus and spleen. In the brain, highest expression in cerebellar granule cells, brainstem, hippocampus and cerebral cortex.

The protein resides in the cell membrane. The protein localises to the recycling endosome. It localises to the apical cell membrane. Its subcellular location is the cytoplasmic vesicle. It is found in the perikaryon. The protein resides in the cell projection. The protein localises to the dendrite. It localises to the synaptic cell membrane. It catalyses the reaction K(+)(in) = K(+)(out). It carries out the reaction NH4(+)(in) = NH4(+)(out). The enzyme catalyses Na(+)(in) = Na(+)(out). The catalysed reaction is Rb(+)(in) = Rb(+)(out). It catalyses the reaction Cs(+)(in) = Cs(+)(out). It carries out the reaction Li(+)(in) = Li(+)(out). The enzyme catalyses L-glutamate(out) = L-glutamate(in). The catalysed reaction is chloride(in) = chloride(out). Inhibited by quinine, quinidine, barium, and internal acidification. Ion channel that contributes to passive transmembrane potassium transport and to the regulation of the resting membrane potential in brain astrocytes, but also in kidney and in other tissues. Forms dimeric channels through which potassium ions pass in accordance with their electrochemical gradient. The channel is selective for K(+) ions at physiological potassium concentrations and at neutral pH, but becomes permeable to Na(+) at subphysiological K(+) levels and upon acidification of the extracellular medium. The homodimer has very low potassium channel activity, when expressed in heterologous systems, and can function as weakly inward rectifying potassium channel. Channel activity is modulated by activation of serotonin receptors. Heterodimeric channels containing KCNK1 and KCNK2 have much higher activity, and may represent the predominant form in astrocytes. Heterodimeric channels containing KCNK1 and KCNK3 or KCNK9 have much higher activity. Heterodimeric channels formed by KCNK1 and KCNK9 may contribute to halothane-sensitive currents. Mediates outward rectifying potassium currents in dentate gyrus granule cells and contributes to the regulation of their resting membrane potential. Contributes to the regulation of action potential firing in dentate gyrus granule cells and down-regulates their intrinsic excitability. In astrocytes, the heterodimer formed by KCNK1 and KCNK2 is required for rapid glutamate release in response to activation of G-protein coupled receptors, such as F2R and CNR1. Required for normal ion and water transport in the kidney. Contributes to the regulation of the resting membrane potential of pancreatic beta cells. The low channel activity of homodimeric KCNK1 may be due to sumoylation. The low channel activity may be due to rapid internalization from the cell membrane and retention in recycling endosomes. Permeable to monovalent cations with ion selectivity for K(+) &gt; Rb(+) &gt;&gt; NH4(+) &gt;&gt; Cs(+) = Na(+) = Li(+). The polypeptide is Potassium channel subfamily K member 1 (Kcnk1) (Mus musculus (Mouse)).